An 84-amino-acid chain; its full sequence is Large ribosomal subunit protein bL27 (84 aa).

The segment at 1–24 (MAHKKGAASTKNGRDSNSQRLGVK) is disordered. Residues 9–20 (STKNGRDSNSQR) show a composition bias toward polar residues.

It belongs to the bacterial ribosomal protein bL27 family.

This is Large ribosomal subunit protein bL27 from Nocardioides sp. (strain ATCC BAA-499 / JS614).